A 112-amino-acid chain; its full sequence is M-myrmeciitoxin-Mp1 (112 aa).

The N-terminal stretch at 1-26 (MKLSCLLLTLTIIFVLTIVHAPNVEA) is a signal peptide. Residues 27–56 (KDLADPESEAVGFADAFGEADAVGEADPNA) constitute a propeptide that is removed on maturation. A critical for cytotoxic activity region spans residues 57–78 (GLGSVFGRLARILGRVIPKVAK). The tract at residues 93 to 106 (KEAIPMAVEMAKSQ) is igE-binding determinant.

It belongs to the formicidae venom precursor-01 superfamily. Ant pilosulin family. As to expression, expressed by the venom gland.

Its subcellular location is the secreted. Functionally, has strong cytotoxic and hemolytic activities. Is more potent against mononuclear leukocytes than against granulocytes. The synthesized peptide 57-76 shows a potent and broad spectrum antimicrobial activity against both Gram-positive and Gram-negative bacteria, and also against the fungus C.albicans. Adopts an alpha-helical structure. The chain is M-myrmeciitoxin-Mp1 from Myrmecia pilosula (Jack jumper ant).